The chain runs to 470 residues: 6-phospho-beta-galactosidase 1 (470 aa).

The D-galactose 6-phosphate site is built by Gln23, His120, Asn163, Glu164, and Asn300. The active-site Proton donor is Glu164. Glu378 (nucleophile) is an active-site residue. D-galactose 6-phosphate contacts are provided by Ser434, Trp435, Lys441, and Tyr443.

It belongs to the glycosyl hydrolase 1 family.

It carries out the reaction a 6-phospho-beta-D-galactoside + H2O = D-galactose 6-phosphate + an alcohol. Its pathway is carbohydrate metabolism; lactose degradation; D-galactose 6-phosphate and beta-D-glucose from lactose 6-phosphate: step 1/1. The sequence is that of 6-phospho-beta-galactosidase 1 from Streptococcus pneumoniae serotype 4 (strain ATCC BAA-334 / TIGR4).